The following is a 385-amino-acid chain: Glucans biosynthesis protein C (385 aa).

10 helical membrane-spanning segments follow: residues 17–37 (AWLMLLGIPFHISLIYSSHTW), 60–80 (MLVFFVISGYFSYMLFLRYPL), 91–111 (VGIPMLTAIPLLTLPQFIMLQ), 137–157 (ISHLWFLLVLVVMTTLCVWIF), 173–193 (KFSMVKLSVIFLCLGIGYAVI), 212–232 (FIVMQTLFYLPFFILGALAFI), 239–259 (LFTTPSRGCTLAAALAFVAYL), 274–294 (TESVITMVLGLWMVNVVFSFG), 311–331 (ASLFIYLVHHPLTLFFGAYIT), and 338–358 (WLGFLCGLIFVVGIAIILYEI).

Belongs to the acyltransferase 3 family. OpgC subfamily.

Its subcellular location is the cell membrane. It functions in the pathway glycan metabolism; osmoregulated periplasmic glucan (OPG) biosynthesis. Necessary for the succinyl substitution of periplasmic glucans. Could catalyze the transfer of succinyl residues from the cytoplasmic side of the membrane to the nascent glucan backbones on the periplasmic side of the membrane. The sequence is that of Glucans biosynthesis protein C from Shigella boydii serotype 4 (strain Sb227).